We begin with the raw amino-acid sequence, 1069 residues long: Carbamoyl phosphate synthase large chain (1069 aa).

A carboxyphosphate synthetic domain region spans residues 1 to 401; it reads MPLNKDIKKV…AFLKGIRSLE (401 aa). Residues arginine 129, arginine 169, glycine 175, glycine 176, lysine 208, valine 210, glutamate 215, glycine 241, isoleucine 242, histidine 243, glutamine 284, and glutamate 298 each coordinate ATP. Residues 133–327 form the ATP-grasp 1 domain; it reads RDMMNRIGEP…IAKLAAKIAL (195 aa). Glutamine 284, glutamate 298, and asparagine 300 together coordinate Mg(2+). Mn(2+) is bound by residues glutamine 284, glutamate 298, and asparagine 300. Positions 402–549 are oligomerization domain; it reads IGKYSLDHNK…YSTYEQYDEV (148 aa). Residues 550-932 form a carbamoyl phosphate synthetic domain region; that stretch reads EVSNNKKVIV…ALYKGFVGAY (383 aa). The 191-residue stretch at 674–864 folds into the ATP-grasp 2 domain; it reads DELLERLGIS…IVDLATQVML (191 aa). 10 residues coordinate ATP: arginine 710, lysine 749, leucine 751, glutamate 755, glycine 780, valine 781, histidine 782, serine 783, glutamine 823, and glutamate 835. Residues glutamine 823, glutamate 835, and asparagine 837 each coordinate Mg(2+). Glutamine 823, glutamate 835, and asparagine 837 together coordinate Mn(2+). Positions 932–1069 constitute an MGS-like domain; it reads YMYPSKEKGK…KDLEVFNIAK (138 aa). The interval 933–1069 is allosteric domain; it reads MYPSKEKGKI…KDLEVFNIAK (137 aa).

This sequence belongs to the CarB family. Composed of two chains; the small (or glutamine) chain promotes the hydrolysis of glutamine to ammonia, which is used by the large (or ammonia) chain to synthesize carbamoyl phosphate. Tetramer of heterodimers (alpha,beta)4. Requires Mg(2+) as cofactor. It depends on Mn(2+) as a cofactor.

It carries out the reaction hydrogencarbonate + L-glutamine + 2 ATP + H2O = carbamoyl phosphate + L-glutamate + 2 ADP + phosphate + 2 H(+). It catalyses the reaction hydrogencarbonate + NH4(+) + 2 ATP = carbamoyl phosphate + 2 ADP + phosphate + 2 H(+). Its pathway is amino-acid biosynthesis; L-arginine biosynthesis; carbamoyl phosphate from bicarbonate: step 1/1. It functions in the pathway pyrimidine metabolism; UMP biosynthesis via de novo pathway; (S)-dihydroorotate from bicarbonate: step 1/3. In terms of biological role, large subunit of the glutamine-dependent carbamoyl phosphate synthetase (CPSase). CPSase catalyzes the formation of carbamoyl phosphate from the ammonia moiety of glutamine, carbonate, and phosphate donated by ATP, constituting the first step of 2 biosynthetic pathways, one leading to arginine and/or urea and the other to pyrimidine nucleotides. The large subunit (synthetase) binds the substrates ammonia (free or transferred from glutamine from the small subunit), hydrogencarbonate and ATP and carries out an ATP-coupled ligase reaction, activating hydrogencarbonate by forming carboxy phosphate which reacts with ammonia to form carbamoyl phosphate. This chain is Carbamoyl phosphate synthase large chain, found in Clostridium beijerinckii (strain ATCC 51743 / NCIMB 8052) (Clostridium acetobutylicum).